Here is a 310-residue protein sequence, read N- to C-terminus: Ribosomal RNA small subunit methyltransferase H (310 aa).

S-adenosyl-L-methionine is bound by residues 35-37 (GGH), Asp52, Phe79, Asp100, and Gln107.

Belongs to the methyltransferase superfamily. RsmH family.

The protein localises to the cytoplasm. The catalysed reaction is cytidine(1402) in 16S rRNA + S-adenosyl-L-methionine = N(4)-methylcytidine(1402) in 16S rRNA + S-adenosyl-L-homocysteine + H(+). Specifically methylates the N4 position of cytidine in position 1402 (C1402) of 16S rRNA. The protein is Ribosomal RNA small subunit methyltransferase H of Anaeromyxobacter sp. (strain K).